We begin with the raw amino-acid sequence, 436 residues long: Glutamyl-tRNA reductase (436 aa).

Substrate-binding positions include 49 to 52, Ser109, 114 to 116, and Gln120; these read TCNR and EGQ. Cys50 acts as the Nucleophile in catalysis. 198 to 203 provides a ligand contact to NADP(+); that stretch reads GAGRMS.

Belongs to the glutamyl-tRNA reductase family. Homodimer.

It carries out the reaction (S)-4-amino-5-oxopentanoate + tRNA(Glu) + NADP(+) = L-glutamyl-tRNA(Glu) + NADPH + H(+). The protein operates within porphyrin-containing compound metabolism; protoporphyrin-IX biosynthesis; 5-aminolevulinate from L-glutamyl-tRNA(Glu): step 1/2. It functions in the pathway porphyrin-containing compound metabolism; chlorophyll biosynthesis. Catalyzes the NADPH-dependent reduction of glutamyl-tRNA(Glu) to glutamate 1-semialdehyde (GSA). This chain is Glutamyl-tRNA reductase, found in Prochlorococcus marinus (strain MIT 9312).